The chain runs to 367 residues: MSDNSQKKVIVGMSGGVDSSVSAYLLQQQGYQVAGLFMKNWEEDDDEEYCSAATDLADAQSVCDKLGIELHTVNFAAEYWDNVFEHFLAEYRAGRTPNPDILCNKEIKFKAFLEFAAEDLNADYIATGHYVRRRDINGKSQLLRGLDNNKDQSYFLYTLSHQQIAQSLFPVGELEKPEVRRIAEKIGLVTAKKKDSTGICFIGERKFRDFLGRYLPAKPGPIMTVDGESLGEHQGLMYHTLGQRKGLGIGGTKEGSEEPWYVIDKDVQNNILIVAQGHEHPRLMSTGLIAQQLYWVDRQTLTEKIHCVVKTRYRQQDIPCSVTPISEDKIEVHFANPVAAVTPGQSAVFYQGEVCLGGGVIEQRLQE.

ATP contacts are provided by residues 12-19 and methionine 38; that span reads GMSGGVDS. The tract at residues 98–100 is interaction with target base in tRNA; sequence NPD. The active-site Nucleophile is the cysteine 103. Residues cysteine 103 and cysteine 200 are joined by a disulfide bond. Glycine 128 serves as a coordination point for ATP. The interaction with tRNA stretch occupies residues 150–152; the sequence is KDQ. Residue cysteine 200 is the Cysteine persulfide intermediate of the active site. Residues 312 to 313 form an interaction with tRNA region; sequence RY.

Belongs to the MnmA/TRMU family. Interacts with TusE.

The protein resides in the cytoplasm. The enzyme catalyses S-sulfanyl-L-cysteinyl-[protein] + uridine(34) in tRNA + AH2 + ATP = 2-thiouridine(34) in tRNA + L-cysteinyl-[protein] + A + AMP + diphosphate + H(+). Functionally, catalyzes the 2-thiolation of uridine at the wobble position (U34) of tRNA(Lys), tRNA(Glu) and tRNA(Gln), leading to the formation of s(2)U34, the first step of tRNA-mnm(5)s(2)U34 synthesis. Sulfur is provided by IscS, via a sulfur-relay system. Binds ATP and its substrate tRNAs. This Photorhabdus laumondii subsp. laumondii (strain DSM 15139 / CIP 105565 / TT01) (Photorhabdus luminescens subsp. laumondii) protein is tRNA-specific 2-thiouridylase MnmA.